The sequence spans 358 residues: Myb family transcription factor IPN2 (358 aa).

Residues 1-20 form a disordered region; it reads MERMFPPKKPSTMNSHDRPM. The HTH myb-type domain occupies 32–92; it reads TDPKPRLRWT…HLQKFRLGKQ (61 aa). The H-T-H motif DNA-binding region spans 63–88; that stretch reads PKTIMRVMGVKGLTLYHLKSHLQKFR. A coiled-coil region spans residues 127–171; it reads NMNEMQIEVQRRLHEQLEVQKHLQLRIEAQGKYMQSILEKAYQTL. Residues 139-144 carry the LHEQLE motif; it reads LHEQLE. The interval 310–358 is disordered; it reads IYDSKPEEKKFDASMKLERPSPRRAPLGERMSPMITTGTMAQGRSSPFG. Residues 311–330 show a composition bias toward basic and acidic residues; the sequence is YDSKPEEKKFDASMKLERPS. The segment covering 343–358 has biased composition (polar residues); that stretch reads MITTGTMAQGRSSPFG.

It belongs to the MYB-CC family. In terms of assembly, interacts with NSP2. Expressed in leaves, stems, nodules and roots.

The protein localises to the nucleus. In terms of biological role, transcriptional regulator required for Nod-factor-induced gene expression. Transcription activator involved in the induction of NIN and ENOD40 genes, which are required for rhizobial infection and early nodule development. Possesses strong transactivation activity in vitro. Does not seem to contribute to the early steps of the arbuscular mycorrhizal fungus infection and colonization processes in roots. This Lotus japonicus (Lotus corniculatus var. japonicus) protein is Myb family transcription factor IPN2.